A 78-amino-acid chain; its full sequence is Small ribosomal subunit protein bS20 (78 aa).

Belongs to the bacterial ribosomal protein bS20 family.

In terms of biological role, binds directly to 16S ribosomal RNA. The sequence is that of Small ribosomal subunit protein bS20 from Streptococcus thermophilus (strain ATCC BAA-491 / LMD-9).